A 575-amino-acid polypeptide reads, in one-letter code: Adenine deaminase (575 aa).

This sequence belongs to the metallo-dependent hydrolases superfamily. Adenine deaminase family. Mn(2+) serves as cofactor.

The catalysed reaction is adenine + H2O + H(+) = hypoxanthine + NH4(+). The chain is Adenine deaminase from Nitratidesulfovibrio vulgaris (strain ATCC 29579 / DSM 644 / CCUG 34227 / NCIMB 8303 / VKM B-1760 / Hildenborough) (Desulfovibrio vulgaris).